The sequence spans 550 residues: tRNA modification GTPase MnmE (550 aa).

Arginine 20, glutamate 78, and arginine 116 together coordinate (6S)-5-formyl-5,6,7,8-tetrahydrofolate. In terms of domain architecture, TrmE-type G spans 212-478 (GFSVVIVGKP…LLDKIFDIIS (267 aa)). Asparagine 222 contacts K(+). GTP-binding positions include 222–227 (NVGKST), 241–247 (TDIPGTT), and 266–269 (DTAG). Residue serine 226 coordinates Mg(2+). K(+) contacts are provided by threonine 241, isoleucine 243, and threonine 246. Position 247 (threonine 247) interacts with Mg(2+). Residue lysine 550 participates in (6S)-5-formyl-5,6,7,8-tetrahydrofolate binding.

The protein belongs to the TRAFAC class TrmE-Era-EngA-EngB-Septin-like GTPase superfamily. TrmE GTPase family. Homodimer. Heterotetramer of two MnmE and two MnmG subunits. K(+) is required as a cofactor.

The protein localises to the cytoplasm. In terms of biological role, exhibits a very high intrinsic GTPase hydrolysis rate. Involved in the addition of a carboxymethylaminomethyl (cmnm) group at the wobble position (U34) of certain tRNAs, forming tRNA-cmnm(5)s(2)U34. The protein is tRNA modification GTPase MnmE of Neorickettsia sennetsu (strain ATCC VR-367 / Miyayama) (Ehrlichia sennetsu).